The primary structure comprises 387 residues: Formate-dependent phosphoribosylglycinamide formyltransferase (387 aa).

Residues 21–22 (EL) and E81 contribute to the N(1)-(5-phospho-beta-D-ribosyl)glycinamide site. ATP is bound by residues R113, K154, 159 to 164 (SSGHGQ), 193 to 196 (EEFV), and E201. The 189-residue stretch at 118-306 (VFAAETLDLK…EFALHVRAVL (189 aa)) folds into the ATP-grasp domain. Mg(2+) contacts are provided by E265 and E277. N(1)-(5-phospho-beta-D-ribosyl)glycinamide-binding positions include D284, K352, and 359–360 (RR).

This sequence belongs to the PurK/PurT family. In terms of assembly, homodimer.

The catalysed reaction is N(1)-(5-phospho-beta-D-ribosyl)glycinamide + formate + ATP = N(2)-formyl-N(1)-(5-phospho-beta-D-ribosyl)glycinamide + ADP + phosphate + H(+). It participates in purine metabolism; IMP biosynthesis via de novo pathway; N(2)-formyl-N(1)-(5-phospho-D-ribosyl)glycinamide from N(1)-(5-phospho-D-ribosyl)glycinamide (formate route): step 1/1. Involved in the de novo purine biosynthesis. Catalyzes the transfer of formate to 5-phospho-ribosyl-glycinamide (GAR), producing 5-phospho-ribosyl-N-formylglycinamide (FGAR). Formate is provided by PurU via hydrolysis of 10-formyl-tetrahydrofolate. The protein is Formate-dependent phosphoribosylglycinamide formyltransferase of Sulfurovum sp. (strain NBC37-1).